The sequence spans 804 residues: Cas scaffolding protein family member 4 (804 aa).

One can recognise an SH3 domain in the interval 11-73; sequence PKTLLARALY…PANRLQVLRE (63 aa). 2 positions are modified to phosphoserine: Ser-200 and Ser-297. Disordered regions lie at residues 369-395, 607-628, and 642-686; these read LERG…DSDR, QRET…TEHS, and QQSP…TERK. Residues 380–390 are compositionally biased toward polar residues; it reads PWISGQTSFLS. A compositionally biased stretch (basic and acidic residues) spans 649–664; that stretch reads EKGKPTMEGKSNRNPD.

It belongs to the CAS family. Interacts (via SH3 domain) with PTK2/FAK1 (via C-terminus). In terms of processing, phosphorylated on tyrosines by SRC.

It is found in the cytoplasm. The protein resides in the cytoskeleton. The protein localises to the cell junction. It localises to the focal adhesion. In terms of biological role, docking protein that plays a role in tyrosine kinase-based signaling related to cell adhesion and cell spreading. Regulates PTK2/FAK1 activity, focal adhesion integrity, and cell spreading. This Mus musculus (Mouse) protein is Cas scaffolding protein family member 4.